The chain runs to 1021 residues: Peroxisomal ATPase PEX6 (1021 aa).

763-770 (GPPGTGKT) contributes to the ATP binding site.

Belongs to the AAA ATPase family. In terms of assembly, interacts with PEX1; forming the PEX1-PEX6 AAA ATPase complex, which is composed of a heterohexamer formed by a trimer of PEX1-PEX6 dimers.

The protein localises to the cytoplasm. It localises to the cytosol. The protein resides in the peroxisome membrane. The catalysed reaction is ATP + H2O = ADP + phosphate + H(+). Functionally, component of the PEX1-PEX6 AAA ATPase complex, a protein dislocase complex that mediates the ATP-dependent extraction of the PEX5 receptor from peroxisomal membranes, an essential step for PEX5 recycling. Specifically recognizes PEX5 monoubiquitinated at 'Cys-6', and pulls it out of the peroxisome lumen through the PEX2-PEX10-PEX12 retrotranslocation channel. Extraction by the PEX1-PEX6 AAA ATPase complex is accompanied by unfolding of the TPR repeats and release of bound cargo from PEX5. In Eremothecium gossypii (strain ATCC 10895 / CBS 109.51 / FGSC 9923 / NRRL Y-1056) (Yeast), this protein is Peroxisomal ATPase PEX6 (PEX6).